The chain runs to 798 residues: Penicillin-binding protein 1A (798 aa).

Residues M1 to C9 are Cytoplasmic-facing. A helical; Signal-anchor for type II membrane protein membrane pass occupies residues F10–V30. Over T31 to F798 the chain is Periplasmic. The tract at residues L50–E218 is transglycosylase. E88 (proton donor; for transglycosylase activity) is an active-site residue. The transpeptidase stretch occupies residues V414–D700. The active-site Acyl-ester intermediate; for transpeptidase activity is the S461. Residues S751 to F798 form a disordered region. Positions R753–V777 are enriched in basic and acidic residues. The span at L783–F798 shows a compositional bias: polar residues.

This sequence in the N-terminal section; belongs to the glycosyltransferase 51 family. It in the C-terminal section; belongs to the transpeptidase family.

The protein resides in the cell inner membrane. The enzyme catalyses [GlcNAc-(1-&gt;4)-Mur2Ac(oyl-L-Ala-gamma-D-Glu-L-Lys-D-Ala-D-Ala)](n)-di-trans,octa-cis-undecaprenyl diphosphate + beta-D-GlcNAc-(1-&gt;4)-Mur2Ac(oyl-L-Ala-gamma-D-Glu-L-Lys-D-Ala-D-Ala)-di-trans,octa-cis-undecaprenyl diphosphate = [GlcNAc-(1-&gt;4)-Mur2Ac(oyl-L-Ala-gamma-D-Glu-L-Lys-D-Ala-D-Ala)](n+1)-di-trans,octa-cis-undecaprenyl diphosphate + di-trans,octa-cis-undecaprenyl diphosphate + H(+). It catalyses the reaction Preferential cleavage: (Ac)2-L-Lys-D-Ala-|-D-Ala. Also transpeptidation of peptidyl-alanyl moieties that are N-acyl substituents of D-alanine.. The protein operates within cell wall biogenesis; peptidoglycan biosynthesis. Its function is as follows. Cell wall formation. Synthesis of cross-linked peptidoglycan from the lipid intermediates. The enzyme has a penicillin-insensitive transglycosylase N-terminal domain (formation of linear glycan strands) and a penicillin-sensitive transpeptidase C-terminal domain (cross-linking of the peptide subunits). The protein is Penicillin-binding protein 1A (mrcA) of Neisseria cinerea.